The primary structure comprises 311 residues: Formimidoylglutamase (311 aa).

Residues His122, Asp151, His153, Asp155, Cys242, and Asp244 each contribute to the Mn(2+) site.

Belongs to the arginase family. As to quaternary structure, homodimer. Mn(2+) serves as cofactor.

The enzyme catalyses N-formimidoyl-L-glutamate + H2O = formamide + L-glutamate. The protein operates within amino-acid degradation; L-histidine degradation into L-glutamate; L-glutamate from N-formimidoyl-L-glutamate (hydrolase route): step 1/1. Its function is as follows. Catalyzes the conversion of N-formimidoyl-L-glutamate to L-glutamate and formamide. The chain is Formimidoylglutamase from Pseudomonas aeruginosa (strain ATCC 15692 / DSM 22644 / CIP 104116 / JCM 14847 / LMG 12228 / 1C / PRS 101 / PAO1).